Reading from the N-terminus, the 572-residue chain is Phosphoenolpyruvate-protein phosphotransferase (572 aa).

H190 functions as the Tele-phosphohistidine intermediate in the catalytic mechanism. The phosphoenolpyruvate site is built by R297 and R333. Residues E432 and D456 each contribute to the Mg(2+) site. Phosphoenolpyruvate contacts are provided by residues 455–456 (ND) and R466. Residue C503 is the Proton donor of the active site.

It belongs to the PEP-utilizing enzyme family. As to quaternary structure, homodimer. Mg(2+) is required as a cofactor.

It is found in the cytoplasm. The catalysed reaction is L-histidyl-[protein] + phosphoenolpyruvate = N(pros)-phospho-L-histidyl-[protein] + pyruvate. General (non sugar-specific) component of the phosphoenolpyruvate-dependent sugar phosphotransferase system (sugar PTS). This major carbohydrate active-transport system catalyzes the phosphorylation of incoming sugar substrates concomitantly with their translocation across the cell membrane. Enzyme I transfers the phosphoryl group from phosphoenolpyruvate (PEP) to the phosphoryl carrier protein (HPr). The sequence is that of Phosphoenolpyruvate-protein phosphotransferase (ptsI) from Listeria monocytogenes serovar 1/2a (strain ATCC BAA-679 / EGD-e).